We begin with the raw amino-acid sequence, 311 residues long: Asialoglycoprotein receptor 2 (311 aa).

The segment at 1–44 is disordered; that stretch reads MAKDFQDIQQLSSEENDHPFHQGEGPGTRRLNPRRGNPFLKGPP. Topologically, residues 1–58 are cytoplasmic; it reads MAKDFQDIQQLSSEENDHPFHQGEGPGTRRLNPRRGNPFLKGPPPAQPLAQRLCSMVC. Residues 5 to 8 carry the Endocytosis signal motif; sequence FQDI. Ser13 is modified (phosphoserine). Cys54 carries the S-palmitoyl cysteine lipid modification. The chain crosses the membrane as a helical; Signal-anchor for type II membrane protein span at residues 59 to 79; it reads FSLLALSFNILLLVVICVTGS. Residues 80–311 are Extracellular-facing; that stretch reads QSEGHGGAQL…KRRNATGEVA (232 aa). N-linked (GlcNAc...) asparagine glycans are attached at residues Asn102 and Asn170. One can recognise a C-type lectin domain in the interval 176 to 302; it reads CCPVNWVEHQ…LQVYRWVCEK (127 aa). Cystine bridges form between Cys177-Cys188, Cys205-Cys300, and Cys278-Cys292. N-linked (GlcNAc...) asparagine glycosylation occurs at Asn305.

The functioning ligand-binding unit of this receptor is thought to be at least a dimer. Interacts with LASS2. As to quaternary structure, (Microbial infection) Interacts with hepatitis E virus capsid protein ORF2. In terms of tissue distribution, expressed exclusively in hepatic parenchymal cells.

The protein localises to the membrane. Its function is as follows. Mediates the endocytosis of plasma glycoproteins to which the terminal sialic acid residue on their complex carbohydrate moieties has been removed. The receptor recognizes terminal galactose and N-acetylgalactosamine units. After ligand binding to the receptor, the resulting complex is internalized and transported to a sorting organelle, where receptor and ligand are disassociated. The receptor then returns to the cell membrane surface. The sequence is that of Asialoglycoprotein receptor 2 (ASGR2) from Homo sapiens (Human).